A 471-amino-acid polypeptide reads, in one-letter code: Glutamate--tRNA ligase 1 (471 aa).

The 'HIGH' region signature appears at 15–25 (PSPTGYLHIGG). The 'KMSKS' region signature appears at 243–247 (KLSKR). ATP is bound at residue Lys246.

It belongs to the class-I aminoacyl-tRNA synthetase family. Glutamate--tRNA ligase type 1 subfamily. Monomer.

Its subcellular location is the cytoplasm. It catalyses the reaction tRNA(Glu) + L-glutamate + ATP = L-glutamyl-tRNA(Glu) + AMP + diphosphate. Its function is as follows. Catalyzes the attachment of glutamate to tRNA(Glu) in a two-step reaction: glutamate is first activated by ATP to form Glu-AMP and then transferred to the acceptor end of tRNA(Glu). The polypeptide is Glutamate--tRNA ligase 1 (Cereibacter sphaeroides (strain ATCC 17023 / DSM 158 / JCM 6121 / CCUG 31486 / LMG 2827 / NBRC 12203 / NCIMB 8253 / ATH 2.4.1.) (Rhodobacter sphaeroides)).